The sequence spans 310 residues: MNGLSVSELCCLFCCPPCPGRIAAKLAFLPPEPTYSLVPEPEPGPGGAGAAPSGPLRTSAATPGRWKIHLTERADFQYGQRELDTIEVFVTKSARANRIACMYVRCVPGARYTVLFSHGNAVDLGQMCSFYVGLGTRIGCNIFSYDYSGYGISSGRPSEKNLYADIDAAWQALRTRYGISPDSIILYGQSIGTVPTVDLASRYECAAVVLHSPLTSGMRVAFPDTKKTYCFDAFPNIEKVSKITSPVLIIHGTEDEVIDFSHGLALYERCPKAVEPLWVEGAGHNDIELYSQYLERLRRFISQELPSQRT.

The segment at 38–61 (VPEPEPGPGGAGAAPSGPLRTSAA) is disordered. Active-site charge relay system residues include serine 190, aspartate 255, and histidine 284. At serine 307 the chain carries Phosphoserine.

The protein belongs to the AB hydrolase superfamily. ABHD17 family. Post-translationally, palmitoylated on cysteine residues located in a cysteine cluster at the N-terminus which promotes membrane localization. Palmitoylation is required for post-synaptic localization and for depalmitoylating activity towards DLG4/PSD95. Expressed in brain (at protein level). Expressed in hippocampal neurons.

The protein localises to the cell membrane. It localises to the recycling endosome membrane. It is found in the cell projection. Its subcellular location is the dendritic spine. The protein resides in the postsynaptic density membrane. It carries out the reaction S-hexadecanoyl-L-cysteinyl-[protein] + H2O = L-cysteinyl-[protein] + hexadecanoate + H(+). Its function is as follows. Hydrolyzes fatty acids from S-acylated cysteine residues in proteins. Has depalmitoylating activity towards NRAS. Has depalmitoylating activity towards DLG4/PSD95. May have depalmitoylating activity towards MAP6. In Rattus norvegicus (Rat), this protein is Alpha/beta hydrolase domain-containing protein 17A.